The primary structure comprises 209 residues: Large ribosomal subunit protein uL3 (209 aa).

Positions 128 to 154 (QQRGPMTHGSKFHRAPGSMGASSDPSR) are disordered.

It belongs to the universal ribosomal protein uL3 family. In terms of assembly, part of the 50S ribosomal subunit. Forms a cluster with proteins L14 and L19.

Its function is as follows. One of the primary rRNA binding proteins, it binds directly near the 3'-end of the 23S rRNA, where it nucleates assembly of the 50S subunit. This chain is Large ribosomal subunit protein uL3, found in Clostridium beijerinckii (strain ATCC 51743 / NCIMB 8052) (Clostridium acetobutylicum).